Consider the following 405-residue polypeptide: Acetate kinase (405 aa).

Asn7 contacts Mg(2+). An ATP-binding site is contributed by Lys14. Arg99 lines the substrate pocket. Asp156 serves as the catalytic Proton donor/acceptor. 215 to 219 (HLGNG) contacts ATP. Glu391 contacts Mg(2+).

Belongs to the acetokinase family. Homodimer. It depends on Mg(2+) as a cofactor. Requires Mn(2+) as cofactor.

It is found in the cytoplasm. It carries out the reaction acetate + ATP = acetyl phosphate + ADP. Its pathway is metabolic intermediate biosynthesis; acetyl-CoA biosynthesis; acetyl-CoA from acetate: step 1/2. Its function is as follows. Catalyzes the formation of acetyl phosphate from acetate and ATP. Can also catalyze the reverse reaction. The polypeptide is Acetate kinase (Nostoc sp. (strain PCC 7120 / SAG 25.82 / UTEX 2576)).